The following is an 81-amino-acid chain: Cell division protein ZapB (81 aa).

Residues 6–80 are a coiled coil; the sequence is EVFEKLEAKV…LQALLGRMEE (75 aa). Residues 38–47 show a composition bias toward polar residues; the sequence is SLAQDVQSAQ. A disordered region spans residues 38-67; sequence SLAQDVQSAQHQREELERENNHLKEQQSGW. Over residues 48–62 the composition is skewed to basic and acidic residues; it reads HQREELERENNHLKE.

It belongs to the ZapB family. As to quaternary structure, homodimer. The ends of the coiled-coil dimer bind to each other, forming polymers. Interacts with FtsZ.

The protein localises to the cytoplasm. In terms of biological role, non-essential, abundant cell division factor that is required for proper Z-ring formation. It is recruited early to the divisome by direct interaction with FtsZ, stimulating Z-ring assembly and thereby promoting cell division earlier in the cell cycle. Its recruitment to the Z-ring requires functional FtsA or ZipA. This is Cell division protein ZapB from Citrobacter koseri (strain ATCC BAA-895 / CDC 4225-83 / SGSC4696).